Here is a 116-residue protein sequence, read N- to C-terminus: Aspartate 1-decarboxylase (116 aa).

S25 acts as the Schiff-base intermediate with substrate; via pyruvic acid in catalysis. The residue at position 25 (S25) is a Pyruvic acid (Ser). T57 is a binding site for substrate. Catalysis depends on Y58, which acts as the Proton donor. 73-75 (GAA) is a substrate binding site.

The protein belongs to the PanD family. As to quaternary structure, heterooctamer of four alpha and four beta subunits. Pyruvate is required as a cofactor. Is synthesized initially as an inactive proenzyme, which is activated by self-cleavage at a specific serine bond to produce a beta-subunit with a hydroxyl group at its C-terminus and an alpha-subunit with a pyruvoyl group at its N-terminus.

The protein localises to the cytoplasm. The enzyme catalyses L-aspartate + H(+) = beta-alanine + CO2. The protein operates within cofactor biosynthesis; (R)-pantothenate biosynthesis; beta-alanine from L-aspartate: step 1/1. Its function is as follows. Catalyzes the pyruvoyl-dependent decarboxylation of aspartate to produce beta-alanine. The polypeptide is Aspartate 1-decarboxylase (Phocaeicola vulgatus (strain ATCC 8482 / DSM 1447 / JCM 5826 / CCUG 4940 / NBRC 14291 / NCTC 11154) (Bacteroides vulgatus)).